Reading from the N-terminus, the 799-residue chain is Homeobox protein engrailed (799 aa).

Disordered regions lie at residues 189 to 331 (LPSR…DATK), 369 to 444 (GNFL…SLRQ), 554 to 664 (HPFL…DKAK), and 678 to 705 (SDRPSSGPRSRKPKRSKAQDEKRPRTAF). The span at 210-222 (QSPSTSIRSNLVS) shows a compositional bias: polar residues. Basic and acidic residues-rich tracts occupy residues 228 to 239 (SRRDDQETSDSC) and 246 to 256 (RAINDSERYDV). Polar residues-rich tracts occupy residues 284–299 (LNLTTTGGDSVSQLFH) and 377–401 (HTFQPNEDHQTVSSAQTTPRFSSPD). Residues 416–431 (ESLSSPSSSSSSSRSS) show a composition bias toward low complexity. 2 stretches are compositionally biased toward basic and acidic residues: residues 608-619 (DQKKRSRDESAS) and 629-648 (VHLKENSQKSDPVLKQEKGN). Positions 698 to 757 (EKRPRTAFTNDQLQRLKREFDECRYLTETRRKNLADELGLTESQIKIWFQNKRAKIKKSV) form a DNA-binding region, homeobox.

This sequence belongs to the engrailed homeobox family. As to expression, expressed in the dorsal ectoderm of early gastrulae in a band corresponding to the peripheral area of the presumptive shell gland. Also expressed at four points along the posterior ectoderm. In late gastrulae, it is predominantly expressed in the peripheral ectoderm of the shell gland and in spots at the posterior end behind the presumptive foot. Expressed in late trochophore larvae at four points behind the foot, at two locations at the base of the foot and in the peripheral ectoderm of the shell gland.

It is found in the nucleus. May be involved in shell and shell gland formation during development. The sequence is that of Homeobox protein engrailed from Lymnaea stagnalis (Great pond snail).